The sequence spans 301 residues: Phosphatidylserine decarboxylase proenzyme (301 aa).

Residues Asp117, His173, and Ser260 each act as charge relay system; for autoendoproteolytic cleavage activity in the active site. Ser260 functions as the Schiff-base intermediate with substrate; via pyruvic acid; for decarboxylase activity in the catalytic mechanism. Residue Ser260 is modified to Pyruvic acid (Ser); by autocatalysis.

This sequence belongs to the phosphatidylserine decarboxylase family. PSD-B subfamily. Prokaryotic type II sub-subfamily. As to quaternary structure, heterodimer of a large membrane-associated beta subunit and a small pyruvoyl-containing alpha subunit. The cofactor is pyruvate. In terms of processing, is synthesized initially as an inactive proenzyme. Formation of the active enzyme involves a self-maturation process in which the active site pyruvoyl group is generated from an internal serine residue via an autocatalytic post-translational modification. Two non-identical subunits are generated from the proenzyme in this reaction, and the pyruvate is formed at the N-terminus of the alpha chain, which is derived from the carboxyl end of the proenzyme. The autoendoproteolytic cleavage occurs by a canonical serine protease mechanism, in which the side chain hydroxyl group of the serine supplies its oxygen atom to form the C-terminus of the beta chain, while the remainder of the serine residue undergoes an oxidative deamination to produce ammonia and the pyruvoyl prosthetic group on the alpha chain. During this reaction, the Ser that is part of the protease active site of the proenzyme becomes the pyruvoyl prosthetic group, which constitutes an essential element of the active site of the mature decarboxylase.

The protein resides in the cell membrane. It carries out the reaction a 1,2-diacyl-sn-glycero-3-phospho-L-serine + H(+) = a 1,2-diacyl-sn-glycero-3-phosphoethanolamine + CO2. The protein operates within phospholipid metabolism; phosphatidylethanolamine biosynthesis; phosphatidylethanolamine from CDP-diacylglycerol: step 2/2. Catalyzes the formation of phosphatidylethanolamine (PtdEtn) from phosphatidylserine (PtdSer). This is Phosphatidylserine decarboxylase proenzyme from Chlamydia muridarum (strain MoPn / Nigg).